We begin with the raw amino-acid sequence, 147 residues long: Hemoglobin subunit gamma (147 aa).

Residues 3 to 147 (HFTVEEKAVI…VAIALAHKYH (145 aa)) form the Globin domain. Histidine 64 and histidine 93 together coordinate heme b.

Belongs to the globin family. Heterotetramer of two alpha chains and two gamma chains in fetal hemoglobin (Hb F). As to expression, red blood cells.

Its function is as follows. Gamma chains make up the fetal hemoglobin F, in combination with alpha chains. In Cheirogaleus medius (Fat-tailed dwarf lemur), this protein is Hemoglobin subunit gamma (HBG).